The primary structure comprises 151 residues: MLP-like protein 168 (151 aa).

It belongs to the MLP family.

This chain is MLP-like protein 168 (MLP168), found in Arabidopsis thaliana (Mouse-ear cress).